The primary structure comprises 89 residues: Small ribosomal subunit protein uS15 (89 aa).

Belongs to the universal ribosomal protein uS15 family. In terms of assembly, part of the 30S ribosomal subunit. Forms a bridge to the 50S subunit in the 70S ribosome, contacting the 23S rRNA.

Functionally, one of the primary rRNA binding proteins, it binds directly to 16S rRNA where it helps nucleate assembly of the platform of the 30S subunit by binding and bridging several RNA helices of the 16S rRNA. In terms of biological role, forms an intersubunit bridge (bridge B4) with the 23S rRNA of the 50S subunit in the ribosome. The protein is Small ribosomal subunit protein uS15 of Solibacter usitatus (strain Ellin6076).